The sequence spans 699 residues: MNTILVTTSRGLDELLKQEVLTLCPDAQIKQGPGTIQFEGSKEDAYKLCLWSRLANRVIWVLASGKAGDAEALYNTAMGIDWQMQMDSRHTLSVQFIGTNFAIKNTQFGAVRVKDAIVDSFVEQGLPRPSVERKTPDISVYARLHRDNVILGIDLAGASLHQRAYRQETGDAPLKEHIASAMLMRSGWTENTDAPLVDLMCGSGTIAIEAAYIARNIAPGIKRSYWGFTKWLGHEATLWDSLLEDAISVQKPSCGGGIYAGDFSRKMVAIAKANADFAGVFNDISFSQQDATKSSPPVATPGYVVSNPPYGERLGELTSLIPLFSDWGKRFKEAWKGWHVSLLSSNRDLLRVLKLRATKDYAMNNGKLECRLANYVLDEQNTVQFSEDAGNHEFANRLKKNLKRMKGWVKSANTNCYRIYDADLPDYNVAVDRYGDWLVVQEYAPPKTVSEDKARKRLQEVLLHLPAVTGVSPKNIALKVRAQQKGSKQYEKINQSGEMMEVFENGARFLVNLTDYLDTGLFLDHRNTRQKVKALSQGKDVLNLFSYTGSVSVFAAMGGAKSVTTVDMSNTYLDWAKKNVALNKLSGPHAFIQADCTTWLGTHKGKYDLIFIDPPSFSNSKRMQNTWDVQRDHVKMLTDAKACLKEQGTIIFSNNKRGFKLDETAVTALGLQVENITKETIPEDFARKGKIHQCWVLRS.

The 112-residue stretch at 44 to 155 (DAYKLCLWSR…RDNVILGIDL (112 aa)) folds into the THUMP domain.

Belongs to the methyltransferase superfamily. RlmKL family.

It is found in the cytoplasm. It catalyses the reaction guanosine(2445) in 23S rRNA + S-adenosyl-L-methionine = N(2)-methylguanosine(2445) in 23S rRNA + S-adenosyl-L-homocysteine + H(+). The enzyme catalyses guanosine(2069) in 23S rRNA + S-adenosyl-L-methionine = N(2)-methylguanosine(2069) in 23S rRNA + S-adenosyl-L-homocysteine + H(+). Its function is as follows. Specifically methylates the guanine in position 2445 (m2G2445) and the guanine in position 2069 (m7G2069) of 23S rRNA. This chain is Ribosomal RNA large subunit methyltransferase K/L, found in Alteromonas mediterranea (strain DSM 17117 / CIP 110805 / LMG 28347 / Deep ecotype).